Here is a 134-residue protein sequence, read N- to C-terminus: Cytochrome b5 (134 aa).

At Ala-2 the chain carries N-acetylalanine. N6-acetyllysine is present on residues Lys-7, Lys-10, and Lys-19. The Cytochrome b5 heme-binding domain maps to 9 to 85 (VKYYTLEEIQ…SKTFIIGELH (77 aa)). The heme site is built by His-44 and His-68. Residues 109–131 (WWTNWLIPAISALFVALIYHLYT) form a helical membrane-spanning segment.

This sequence belongs to the cytochrome b5 family.

The protein resides in the endoplasmic reticulum membrane. The protein localises to the microsome membrane. In terms of biological role, cytochrome b5 is a membrane-bound hemoprotein functioning as an electron carrier for several membrane-bound oxygenases. This is Cytochrome b5 (CYB5A) from Bos taurus (Bovine).